A 77-amino-acid chain; its full sequence is Putative defensin-like protein 187 (77 aa).

The signal sequence occupies residues 1 to 19; sequence MKNSSIMFVLIVVFLISSS. Disulfide bonds link cysteine 31–cysteine 77, cysteine 43–cysteine 71, and cysteine 47–cysteine 73.

It belongs to the DEFL family.

It is found in the secreted. In Arabidopsis thaliana (Mouse-ear cress), this protein is Putative defensin-like protein 187 (LCR42).